The following is a 299-amino-acid chain: Bifunctional protein FolD (299 aa).

Residues 168–170 (GRS), S193, and I234 contribute to the NADP(+) site.

It belongs to the tetrahydrofolate dehydrogenase/cyclohydrolase family. In terms of assembly, homodimer.

It carries out the reaction (6R)-5,10-methylene-5,6,7,8-tetrahydrofolate + NADP(+) = (6R)-5,10-methenyltetrahydrofolate + NADPH. It catalyses the reaction (6R)-5,10-methenyltetrahydrofolate + H2O = (6R)-10-formyltetrahydrofolate + H(+). The protein operates within one-carbon metabolism; tetrahydrofolate interconversion. Functionally, catalyzes the oxidation of 5,10-methylenetetrahydrofolate to 5,10-methenyltetrahydrofolate and then the hydrolysis of 5,10-methenyltetrahydrofolate to 10-formyltetrahydrofolate. The polypeptide is Bifunctional protein FolD (Bartonella tribocorum (strain CIP 105476 / IBS 506)).